Consider the following 223-residue polypeptide: AMSH-like ubiquitin thioesterase 2 (223 aa).

The 129-residue stretch at 49–177 (VHISERLLED…YGIFKLTDPG (129 aa)) folds into the MPN domain. The Zn(2+) site is built by His127, His129, Asp140, His142, Cys185, His191, and His193. The JAMM motif signature appears at 127–140 (HTHPSQGCFMSSVD).

This sequence belongs to the peptidase M67C family. The cofactor is Zn(2+).

Its function is as follows. Zinc metalloprotease that cleaves 'Lys-48'- and 'Lys-63'-linked polyubiquitin chains. The polypeptide is AMSH-like ubiquitin thioesterase 2 (AMSH2) (Arabidopsis thaliana (Mouse-ear cress)).